Reading from the N-terminus, the 428-residue chain is D-inositol 3-phosphate glycosyltransferase (428 aa).

His-17 is a 1D-myo-inositol 3-phosphate binding site. Residues 23-24 (QP) and Gly-31 contribute to the UDP-N-acetyl-alpha-D-glucosamine site. 1D-myo-inositol 3-phosphate contacts are provided by residues 28 to 33 (DAGGMN), Arg-86, Tyr-119, Thr-143, and Arg-163. The UDP-N-acetyl-alpha-D-glucosamine site is built by Arg-237 and Lys-242. Mg(2+) contacts are provided by Tyr-312, Arg-313, and Ala-315. Residues Glu-325 and Glu-333 each coordinate UDP-N-acetyl-alpha-D-glucosamine. Thr-339 contributes to the Mg(2+) binding site.

This sequence belongs to the glycosyltransferase group 1 family. MshA subfamily. Homodimer.

It catalyses the reaction 1D-myo-inositol 3-phosphate + UDP-N-acetyl-alpha-D-glucosamine = 1D-myo-inositol 2-acetamido-2-deoxy-alpha-D-glucopyranoside 3-phosphate + UDP + H(+). In terms of biological role, catalyzes the transfer of a N-acetyl-glucosamine moiety to 1D-myo-inositol 3-phosphate to produce 1D-myo-inositol 2-acetamido-2-deoxy-glucopyranoside 3-phosphate in the mycothiol biosynthesis pathway. The protein is D-inositol 3-phosphate glycosyltransferase of Thermobispora bispora (strain ATCC 19993 / DSM 43833 / CBS 139.67 / JCM 10125 / KCTC 9307 / NBRC 14880 / R51).